Consider the following 139-residue polypeptide: D-ribose pyranase (139 aa).

Residue His-20 is the Proton donor of the active site. Residues Asp-28, His-106, and Tyr-128–Asn-130 each bind substrate.

It belongs to the RbsD / FucU family. RbsD subfamily. In terms of assembly, homodecamer.

The protein localises to the cytoplasm. The catalysed reaction is beta-D-ribopyranose = beta-D-ribofuranose. It participates in carbohydrate metabolism; D-ribose degradation; D-ribose 5-phosphate from beta-D-ribopyranose: step 1/2. Its function is as follows. Catalyzes the interconversion of beta-pyran and beta-furan forms of D-ribose. This is D-ribose pyranase from Haemophilus influenzae (strain PittGG).